Consider the following 128-residue polypeptide: Early 3 14.7 kDa protein (128 aa).

Belongs to the adenoviridae E3_15 family. In terms of assembly, may bind to host IKBKG, OPTN and RRAGA.

Its subcellular location is the host cytoplasm. It is found in the host nucleus. In terms of biological role, may prevent Nf-kappaB activation by immune signals like Tumor necrosis factor, presumably by inhibiting NFKB1 dimer DNA-binding. May act directly at the TNF receptor to inhibit signaling. In Human adenovirus C serotype 2 (HAdV-2), this protein is Early 3 14.7 kDa protein.